A 208-amino-acid polypeptide reads, in one-letter code: MQILAISKPRNIEEAQLLRSHHELRARVFSDRLGWEVNVVGGCESDTFDDLQPTYILAVSSNDRVVGCARLLPALGPTMVANVFPSLLSAGHLNAHSSMVESSRFCVDTFLAESRGDGSIHEATLTMFAGIIEWSVANRYTEIVTVTDLRFERILARVGWPLQRIGEPRPIGATVAVAGTLPAKADTFMRLRPANYRSQIISTFGQSA.

Belongs to the autoinducer synthase family.

The enzyme catalyses a fatty acyl-[ACP] + S-adenosyl-L-methionine = an N-acyl-L-homoserine lactone + S-methyl-5'-thioadenosine + holo-[ACP] + H(+). Functionally, required for the synthesis of OHHL (N-(3-oxooctanoyl)-L-homoserine lactone), an autoinducer molecule which binds to TraR and thus acts in the control of conjugal transfer. This Sinorhizobium fredii (strain NBRC 101917 / NGR234) protein is Probable acyl-homoserine-lactone synthase (traI).